We begin with the raw amino-acid sequence, 422 residues long: Probable glucuronosyltransferase Os01g0926400 (422 aa).

The Cytoplasmic portion of the chain corresponds to 1-8; it reads MGTRPCAG. Residues 9–29 form a helical; Signal-anchor for type II membrane protein membrane-spanning segment; that stretch reads VASAVAAAVAVLLLAVSCFAA. Residues 30-422 lie on the Lumenal side of the membrane; sequence AATTTQKHGR…QGLENDLKPW (393 aa). N149 carries an N-linked (GlcNAc...) asparagine glycan.

Belongs to the glycosyltransferase 47 family.

Its subcellular location is the golgi apparatus membrane. Involved in the synthesis of glucuronoxylan hemicellulose in secondary cell walls. In Oryza sativa subsp. japonica (Rice), this protein is Probable glucuronosyltransferase Os01g0926400.